Reading from the N-terminus, the 165-residue chain is MALSIHDKKIIVSKINKISNTALSAVTADLQGVCVNKINELRKSGREVGVKMSIVQNTLLSLAIKNTVFECLKKKLKGSTFIAYSMIHPGSGARLFKEFSKKNTQFKITGAAFEGKLLSILEINQLADMPTYKEAIIKLLLTWKMLIAGKLIYTLSAIKQKKETS.

This sequence belongs to the universal ribosomal protein uL10 family. In terms of assembly, part of the ribosomal stalk of the 50S ribosomal subunit. The N-terminus interacts with L11 and the large rRNA to form the base of the stalk. The C-terminus forms an elongated spine to which L12 dimers bind in a sequential fashion forming a multimeric L10(L12)X complex.

Functionally, forms part of the ribosomal stalk, playing a central role in the interaction of the ribosome with GTP-bound translation factors. In Buchnera aphidicola subsp. Acyrthosiphon pisum (strain 5A), this protein is Large ribosomal subunit protein uL10.